The following is a 338-amino-acid chain: Glyceraldehyde-3-phosphate dehydrogenase (338 aa).

Residues 12 to 13 (RI), aspartate 34, and arginine 79 each bind NAD(+). Residues 150-152 (SCT), threonine 181, 210-211 (TG), and arginine 233 contribute to the D-glyceraldehyde 3-phosphate site. Cysteine 151 functions as the Nucleophile in the catalytic mechanism. Asparagine 315 serves as a coordination point for NAD(+).

The protein belongs to the glyceraldehyde-3-phosphate dehydrogenase family. As to quaternary structure, homotetramer.

It is found in the cytoplasm. The enzyme catalyses D-glyceraldehyde 3-phosphate + phosphate + NAD(+) = (2R)-3-phospho-glyceroyl phosphate + NADH + H(+). It participates in carbohydrate degradation; glycolysis; pyruvate from D-glyceraldehyde 3-phosphate: step 1/5. The sequence is that of Glyceraldehyde-3-phosphate dehydrogenase (GPD) from Sordaria macrospora.